Consider the following 357-residue polypeptide: uncharacterized protein (357 aa).

S72 is modified (phosphoserine). Disordered stretches follow at residues 79–98, 264–290, and 323–357; these read GVNEDHYTGGGSSNNNRPSR, QKQLQGNSKPVKNLPNSNAKQRAGASV, and ISDEDEEDEEEDSFQQRSANNRILPAEILSNEPLK. The segment covering 324–335 has biased composition (acidic residues); it reads SDEDEEDEEEDS.

This is an uncharacterized protein from Saccharomyces cerevisiae (strain ATCC 204508 / S288c) (Baker's yeast).